A 170-amino-acid chain; its full sequence is ATP synthase subunit b (170 aa).

A helical membrane pass occupies residues 15 to 37 (FNLFETNILNWAVVIFGLYKFLP). The interval 72-98 (AKKDLSSAEEKASQIKADSLKRSESIR) is disordered.

Belongs to the ATPase B chain family. As to quaternary structure, F-type ATPases have 2 components, F(1) - the catalytic core - and F(0) - the membrane proton channel. F(1) has five subunits: alpha(3), beta(3), gamma(1), delta(1), epsilon(1). F(0) has four main subunits: a(1), b(1), b'(1) and c(10-14). The alpha and beta chains form an alternating ring which encloses part of the gamma chain. F(1) is attached to F(0) by a central stalk formed by the gamma and epsilon chains, while a peripheral stalk is formed by the delta, b and b' chains.

The protein localises to the cellular thylakoid membrane. Its function is as follows. F(1)F(0) ATP synthase produces ATP from ADP in the presence of a proton or sodium gradient. F-type ATPases consist of two structural domains, F(1) containing the extramembraneous catalytic core and F(0) containing the membrane proton channel, linked together by a central stalk and a peripheral stalk. During catalysis, ATP synthesis in the catalytic domain of F(1) is coupled via a rotary mechanism of the central stalk subunits to proton translocation. Component of the F(0) channel, it forms part of the peripheral stalk, linking F(1) to F(0). The protein is ATP synthase subunit b of Prochlorococcus marinus (strain MIT 9215).